Reading from the N-terminus, the 277-residue chain is Putative endonuclease (277 aa).

Putative endonuclease. In Escherichia coli (Enterobacteria phage T5), this protein is Putative endonuclease.